Reading from the N-terminus, the 303-residue chain is Aquaporin-7 (303 aa).

At 1–21 (MAPRSVLETIQSVLQKNMVRE) the chain is on the cytoplasmic side. A Phosphoserine modification is found at Ser-5. Residues 22 to 39 (FLAEFLSTYVMMVFGLGS) traverse the membrane as a helical segment. Residues 40-52 (VAHMVLGENSGSY) lie on the Extracellular side of the membrane. A helical transmembrane segment spans residues 53–70 (LGVNLGFGFGVTMGVHVA). The Cytoplasmic segment spans residues 71–74 (GGIS). An intramembrane region (discontinuously helical) is located at residues 75-88 (GAHMNAAVTFTNCA). An NPA 1 motif is present at residues 79-81 (NAA). Topologically, residues 89–96 (LGRMTWKK) are cytoplasmic. The chain crosses the membrane as a helical span at residues 97 to 117 (FPVYVLGQFLGSFSAAATTYL). Residues 118–152 (IFYGAINHFAGGDLLVTGSKATANIFATYLPEYMT) are Extracellular-facing. A helical transmembrane segment spans residues 153–173 (LWRGFLDEAFVTGMLQLCLFA). Topologically, residues 174 to 185 (ITDKKNSPALQG) are cytoplasmic. Residues 186–202 (TEPLVIGILVTVLGVSL) form a helical membrane-spanning segment. Over 203-206 (GMNS) the chain is Extracellular. The segment at residues 207–220 (GYAINPSRDLPPRL) is an intramembrane region (discontinuously helical). Residues 211–213 (NPS) carry the NPA 2 motif. At 221–238 (FTFIAGWGKQVFRAGNNW) the chain is on the extracellular side. A helical membrane pass occupies residues 239–260 (WWVPVVAPLLGAYLGGIVYLGL). Residues 261 to 303 (IHPSIPQDPQRLENFTARDQKVTASYKNAASANISGSVPLEHF) lie on the Cytoplasmic side of the membrane.

This sequence belongs to the MIP/aquaporin (TC 1.A.8) family. Homotetramer; each monomer provides an independent glycerol/water pore. Two homotetramers on opposing membranes can dimerize, forming a cell-cell junction. Interacts with PLIN1. Post-translationally, phosphorylation by PKA could prevent the interaction with PLIN1. Detected in proximal tubules in kidney. Detected in the capillary network between muscle fibers in skeletal muscle and heart, and in spermatids and on spermatozoa tails in testis and epididymis. Detected in white and brown adipose tissue, especially on small blood vessels (at protein level). Detected in kidney and white adipose tissue.

Its subcellular location is the cell membrane. It is found in the cytoplasmic vesicle membrane. The protein localises to the lipid droplet. The catalysed reaction is glycerol(in) = glycerol(out). It catalyses the reaction H2O(in) = H2O(out). It carries out the reaction urea(in) = urea(out). Glycerol transport is regulated by pH, with the porin being permeable to glycerol at pH 7.4 but not at pH 5.5. Water permeability, however, is not influenced by pH. Its function is as follows. Aquaglyceroporins form homotetrameric transmembrane channels, with each monomer independently mediating glycerol and water transport across the plasma membrane along their osmotic gradient. Could also be permeable to urea. Mediates the efflux of glycerol, formed upon triglyceride hydrolysis, to avoid its accumulation in adipocytes and to make it available to other tissues. In the kidney, mediates the reabsorption of glycerol, preventing its loss in urine, again participating to energy homeostasis. In pancreatic beta cells, it also mediates the efflux of glycerol, regulating its intracellular levels. In Mus musculus (Mouse), this protein is Aquaporin-7.